The sequence spans 240 residues: Mannosyl-D-glycerate transport/metabolism system repressor MngR (240 aa).

Positions 4–72 (KPLYRQIADR…QGSGTYVKEE (69 aa)) constitute an HTH gntR-type domain. The H-T-H motif DNA-binding region spans 32–51 (ESALQTEFGVSRVTVRQALR).

Functionally, represses mngA and mngB. Regulates its own expression. The protein is Mannosyl-D-glycerate transport/metabolism system repressor MngR (mngR) of Escherichia coli (strain K12).